The primary structure comprises 511 residues: Ribosome biogenesis protein YTM1 (511 aa).

Residues 9-112 (VKVVFVTRDE…EVSLSIEYIR (104 aa)) form a ubiquitin-like (UBL) domain region. Positions 122 to 511 (SFSNPDWVAA…IQINNNPQSA (390 aa)) are sufficient for interaction with ERB1 and association with 66S pre-ribosomes. WD repeat units follow at residues 124–168 (SNPD…TGQL), 170–208 (GHNS…YRRK), 248–287 (GHTA…MPAI), 332–372 (GHSA…AVQS), 383–423 (TRST…QVAT), 429–470 (GHTN…SLHV), and 477–511 (TENN…PQSA). A disordered region spans residues 207 to 228 (RKEPGQVGKKELNYDSEEDSDE). Positions 208-219 (KEPGQVGKKELN) are enriched in basic and acidic residues.

The protein belongs to the WD repeat WDR12/YTM1 family. In terms of assembly, component of the NOP7 complex, composed of ERB1, NOP7 and YTM1. The complex is held together by ERB1, which interacts with NOP7 via its N-terminal domain and with YTM1 via a high-affinity interaction between the seven-bladed beta-propeller domains of the 2 proteins. The NOP7 complex associates with the 66S pre-ribosome. Interacts (via UBL domain) with MDN1 (via VWFA/MIDAS domain).

Its subcellular location is the nucleus. The protein resides in the nucleolus. The protein localises to the nucleoplasm. In terms of biological role, component of the NOP7 complex, which is required for maturation of the 25S and 5.8S ribosomal RNAs and formation of the 60S ribosome. The sequence is that of Ribosome biogenesis protein YTM1 from Yarrowia lipolytica (strain CLIB 122 / E 150) (Yeast).